We begin with the raw amino-acid sequence, 124 residues long: Large ribosomal subunit protein bL12 (124 aa).

Belongs to the bacterial ribosomal protein bL12 family. As to quaternary structure, homodimer. Part of the ribosomal stalk of the 50S ribosomal subunit. Forms a multimeric L10(L12)X complex, where L10 forms an elongated spine to which 2 to 4 L12 dimers bind in a sequential fashion. Binds GTP-bound translation factors.

Its function is as follows. Forms part of the ribosomal stalk which helps the ribosome interact with GTP-bound translation factors. Is thus essential for accurate translation. This Burkholderia ambifaria (strain MC40-6) protein is Large ribosomal subunit protein bL12.